The primary structure comprises 241 residues: Large ribosomal subunit protein uL3 (241 aa).

2 disordered regions span residues 140 to 168 and 216 to 241; these read SHRSIGSTGGRQDPGKTFKNKKMPGHMGD and APKPGAFKLNGSEAAPAAEAVNEEGA. Gln151 carries the N5-methylglutamine modification.

Belongs to the universal ribosomal protein uL3 family. In terms of assembly, part of the 50S ribosomal subunit. Forms a cluster with proteins L14 and L19. In terms of processing, methylated by PrmB.

One of the primary rRNA binding proteins, it binds directly near the 3'-end of the 23S rRNA, where it nucleates assembly of the 50S subunit. This Xanthobacter autotrophicus (strain ATCC BAA-1158 / Py2) protein is Large ribosomal subunit protein uL3.